The primary structure comprises 935 residues: Phosphoenolpyruvate carboxylase (935 aa).

Residues H161 and K593 contribute to the active site.

Belongs to the PEPCase type 1 family. Mg(2+) is required as a cofactor.

The catalysed reaction is oxaloacetate + phosphate = phosphoenolpyruvate + hydrogencarbonate. Functionally, forms oxaloacetate, a four-carbon dicarboxylic acid source for the tricarboxylic acid cycle. The sequence is that of Phosphoenolpyruvate carboxylase from Mycolicibacterium paratuberculosis (strain ATCC BAA-968 / K-10) (Mycobacterium paratuberculosis).